A 354-amino-acid polypeptide reads, in one-letter code: Fusarinine C esterase sidJ (354 aa).

It belongs to the sidJ hydrolase family. As to quaternary structure, homodimer.

It carries out the reaction fusarinine C + 3 H2O = 3 fusarinine + Fe(3+). Its function is as follows. Displays specific fusarinine C (FsC) esterase activity but does not hydrolyze triacetylfusarinine C (TAFC), which has the same core structure as fusarinine C. Both extra- and intracellular siderophores have been shown to be crucial for the virulence. Subsequent to chelation of iron and uptake, FsC and TAFC are hydrolyzed and the iron is transferred to the metabolism or to the intracellular siderophore ferricrocin (FC) for transport and storage of iron. The protein is Fusarinine C esterase sidJ of Aspergillus fumigatus (strain ATCC MYA-4609 / CBS 101355 / FGSC A1100 / Af293) (Neosartorya fumigata).